A 1026-amino-acid chain; its full sequence is Cadherin-like and PC-esterase domain-containing protein 1 (1026 aa).

Positions 1-34 (MVCRPVFPCRRRFCPRPFLVGLVVAICLFYQTLT) are cleaved as a signal peptide. Asn-251, Asn-404, Asn-413, Asn-737, Asn-791, and Asn-985 each carry an N-linked (GlcNAc...) asparagine glycan.

It belongs to the PC-esterase family.

The sequence is that of Cadherin-like and PC-esterase domain-containing protein 1 (CPED1) from Homo sapiens (Human).